Reading from the N-terminus, the 405-residue chain is Histone deacetylase clr6 (405 aa).

The interval 6–318 (KKVSYFYDED…WTYETGLLAG (313 aa)) is histone deacetylase. H138 is a catalytic residue.

This sequence belongs to the histone deacetylase family. HD type 1 subfamily. In terms of assembly, heterotetramer of alp13, clr6, prw1 and pst2.

It localises to the nucleus. The enzyme catalyses N(6)-acetyl-L-lysyl-[histone] + H2O = L-lysyl-[histone] + acetate. In terms of biological role, responsible for the deacetylation of lysine residues on the N-terminal part of the core histones (H2A, H2B, H3 and H4). Histone deacetylation gives a tag for epigenetic repression and plays an important role in transcriptional regulation, cell cycle progression and developmental events. Histone deacetylases act via the formation of large multiprotein complexes. Has a role in chromatin assembly and chromosome segregation. In Schizosaccharomyces pombe (strain 972 / ATCC 24843) (Fission yeast), this protein is Histone deacetylase clr6 (clr6).